A 513-amino-acid polypeptide reads, in one-letter code: GMP synthase [glutamine-hydrolyzing] (513 aa).

The region spanning 8–198 (MILVLDFGSQ…VFGVCECVGE (191 aa)) is the Glutamine amidotransferase type-1 domain. C85 functions as the Nucleophile in the catalytic mechanism. Residues H172 and E174 contribute to the active site. In terms of domain architecture, GMPS ATP-PPase spans 199–388 (WSMENFIEIE…LGIPDEIVWR (190 aa)). Residue 226–232 (SGGVDSS) coordinates ATP.

As to quaternary structure, homodimer.

It catalyses the reaction XMP + L-glutamine + ATP + H2O = GMP + L-glutamate + AMP + diphosphate + 2 H(+). Its pathway is purine metabolism; GMP biosynthesis; GMP from XMP (L-Gln route): step 1/1. Its function is as follows. Catalyzes the synthesis of GMP from XMP. The sequence is that of GMP synthase [glutamine-hydrolyzing] from Bacillus licheniformis (strain ATCC 14580 / DSM 13 / JCM 2505 / CCUG 7422 / NBRC 12200 / NCIMB 9375 / NCTC 10341 / NRRL NRS-1264 / Gibson 46).